The primary structure comprises 511 residues: Serine hydroxymethyltransferase (511 aa).

An N6-(pyridoxal phosphate)lysine modification is found at Lys287.

It belongs to the SHMT family. In terms of assembly, homotetramer. It depends on pyridoxal 5'-phosphate as a cofactor.

The catalysed reaction is (6R)-5,10-methylene-5,6,7,8-tetrahydrofolate + glycine + H2O = (6S)-5,6,7,8-tetrahydrofolate + L-serine. Its pathway is one-carbon metabolism; tetrahydrofolate interconversion. In terms of biological role, interconversion of serine and glycine. The protein is Serine hydroxymethyltransferase of Caenorhabditis briggsae.